Here is a 381-residue protein sequence, read N- to C-terminus: tRNA pseudouridine synthase D (381 aa).

Aspartate 81 functions as the Nucleophile in the catalytic mechanism. Residues 160 to 335 (GMPNYFGSQR…TLGSRRFFWV (176 aa)) form the TRUD domain.

It belongs to the pseudouridine synthase TruD family.

It catalyses the reaction uridine(13) in tRNA = pseudouridine(13) in tRNA. Responsible for synthesis of pseudouridine from uracil-13 in transfer RNAs. The polypeptide is tRNA pseudouridine synthase D (Helicobacter pylori (strain P12)).